The primary structure comprises 454 residues: UPF0210 protein Memar_2269 (454 aa).

The protein belongs to the UPF0210 family.

This is UPF0210 protein Memar_2269 from Methanoculleus marisnigri (strain ATCC 35101 / DSM 1498 / JR1).